The sequence spans 993 residues: MPVFHTKTIEGILEPVAQQVSRLVILHEEAEDGNAVLDLTLPVGAVSRAVDNLIKVGYDTCHSSDDRILQADMPPALQRVEASSRLLEDACHMLRADPYSSVARKKLIEGARGILQGTSALLLSFDESEVRKIIRGCRKVLDYLAVAEVIESMDDLAQFVKDISPWLTRVSRNIDAREKELTHQVHREILLRCMDTVKTLSPIMICAMKIFIQITEESQRGQQEAAENRNYLAQRMTDEMNEIIRVLQLTTYDEDEWDSDNVTVMRKALSAAQSLLTSALDWLADSRGRAGATGEKAIRRIVDYSERIAARALPEDARLIRATVSDITSMTDSLCELRNQGGDSQGLASGCANRLKELVGTKEISGILPSALTNTQRTGGTHPAHTVTGRLEQALRWMDNPGVDDNGLGLQAVKAMTSEAGNLQPIYSHLQNVRKFVDLCVEIDRQADQLADLEHRGLGNPPAAHAIRNQLRNKLRELVDIMKKVITDRVVEDFADISTPLKQFVDAVYASPTIVNRELSFEEKAHNLDDHSSRCANTALLVAKCGPCKNKKTVEAIIEAANQVNAMTPQVIKAGKIRLHNDSDSANLHFDNLRREYSDVLNRLRSHVDDAIDTSDFIRASEQAMRQYTVYCENAIRNNEPQQMVDNTSQIARFGNRVLMTAKNEADNSEEPSFVHRVNNAARRLHSAIPPMVNQAKQVALNPRHGGNAQSWRDANEHLLSAVRQVGDAITGAGGSRPPSQNLLVESVPPKAPTSPIVHDRIYIREDIPTPPRPPPPVEISPPPRPPPPPETDDEEETRAFWERYPLLGASSQPILSAAHNLHQELRQWSSHENEIVAAAKRMAILMARLSQLVRGEGGTKKDLVDCAKAIADSSEEVTRLAVQLARQCTVIKMRMTLLQVCERIPTIATQLKILSTVKATMLGSQATIGPYGQPIDGSEEDEEAMQQLVLNAQNLMQSVKDTVRAAEAASIKIRTNSGLRLRWIRKPMWSNF.

Repeat copies occupy residues 258 to 364 and 373 to 480. Positions 258–480 are 2 X repeats; that stretch reads DSDNVTVMRK…LRNKLRELVD (223 aa). Residues 730–797 form a disordered region; it reads ITGAGGSRPP…PPPETDDEEE (68 aa). A compositionally biased stretch (basic and acidic residues) spans 758–768; the sequence is VHDRIYIREDI. A compositionally biased stretch (pro residues) spans 769–790; the sequence is PTPPRPPPPVEISPPPRPPPPP.

The protein belongs to the vinculin/alpha-catenin family. As to quaternary structure, exhibits self-association properties.

The protein localises to the cytoplasm. The protein resides in the cytoskeleton. It is found in the cell junction. It localises to the adherens junction. Its subcellular location is the cell membrane. Functionally, involved in cell adhesion. May be involved in the attachment of the actin-based microfilaments to the plasma membrane. This chain is Vinculin, found in Brugia malayi (Filarial nematode worm).